Here is a 353-residue protein sequence, read N- to C-terminus: MTLSTNHVYPVIWHNGAVSLIDQTRLPNEYTFVEIHRSEDMARAIKTMIVRGAPAIGVAAAYGMYLGAREIETSDRHEFLQNLDKVAQLLGSTRPTAVNLFWAISRMMKVAKETLGTVEDIKQTLFQTAQAINVEDLQTCQAIGDNGLTVLPASPEKLTLLTHCNAGALATAGYGTALGVVRSAWREGRLERLFADETRPRLQGAKLTAWECVQEGIPVTLITDNMAAHCMKQGLIHAVVVGADRIAANGDTANKIGTYSVAIAAKAHNIPFFVAAPLSTVDFELADGSKIPIEERDPTEIYQVGDTILTPEGVDFYNPAFDVTPAELITAIITENGAIAPGELVKLQLKQLV.

Substrate-binding positions include R51–A53, R94, and Q203. D244 functions as the Proton donor in the catalytic mechanism. N254–K255 serves as a coordination point for substrate.

Belongs to the eIF-2B alpha/beta/delta subunits family. MtnA subfamily.

The catalysed reaction is 5-(methylsulfanyl)-alpha-D-ribose 1-phosphate = 5-(methylsulfanyl)-D-ribulose 1-phosphate. It participates in amino-acid biosynthesis; L-methionine biosynthesis via salvage pathway; L-methionine from S-methyl-5-thio-alpha-D-ribose 1-phosphate: step 1/6. Catalyzes the interconversion of methylthioribose-1-phosphate (MTR-1-P) into methylthioribulose-1-phosphate (MTRu-1-P). This Nostoc punctiforme (strain ATCC 29133 / PCC 73102) protein is Methylthioribose-1-phosphate isomerase.